The following is a 219-amino-acid chain: Cytochrome b6 (219 aa).

Residues 32 to 52 (IFYCFGGIVLTCFIIQAATGF) form a helical membrane-spanning segment. Cys35 is a binding site for heme c. Heme b is bound by residues His86 and His100. 3 consecutive transmembrane segments (helical) span residues 90–110 (SGLMVLVLLLHVSRVYLTAGF), 116–136 (LTWISGVILAICTVSFGVTGY), and 190–210 (AHTFILPLVTLALLLTHFLMI). Heme b-binding residues include His191 and His206.

The protein belongs to the cytochrome b family. PetB subfamily. In terms of assembly, the 4 large subunits of the cytochrome b6-f complex are cytochrome b6, subunit IV (17 kDa polypeptide, PetD), cytochrome f and the Rieske protein, while the 4 small subunits are PetG, PetL, PetM and PetN. The complex functions as a dimer. Heme b serves as cofactor. The cofactor is heme c.

It localises to the plastid. The protein localises to the chloroplast thylakoid membrane. In terms of biological role, component of the cytochrome b6-f complex, which mediates electron transfer between photosystem II (PSII) and photosystem I (PSI), cyclic electron flow around PSI, and state transitions. The sequence is that of Cytochrome b6 from Amphidinium operculatum (Dinoflagellate).